A 194-amino-acid polypeptide reads, in one-letter code: MAATAPKAGGSAPEAAASAEAPLQYSLLLQYLVGDKRQPRLLEPGSLGGIPSPAKSEEQKMIERAMESCAFKAALACVGGFVLGGAFGVFTAGIDTNVGFDPKDPYRTPTAREVLKDMGQRGMSYAKNFAIVGAMFSCTECLVESYRGKSDWKNSVISGCITGGAIGFRAGLKAGVIGCGGFAAFSAAIDYYLR.

Disulfide bonds link cysteine 69/cysteine 141 and cysteine 160/cysteine 179. Transmembrane regions (helical) follow at residues 74 to 94, 123 to 143, and 170 to 190; these read ALAC…TAGI, MSYA…ECLV, and AGLK…AAID.

It belongs to the Tim17/Tim22/Tim23 family. In terms of assembly, component of the TIM22 complex, whose core is composed of TIMM22, associated with peripheral protein FXC1/TIMM10B and the 70 kDa heterohexamer. In most cases, the 70 kDa complex is composed of TIMM9 and TIMM10 (TIMM10A or TIMM10B). A small fraction of the 70 kDa complex is composed of TIMM8 (TIMM8A/DDP1 or TIMM8B/DDP2) and TIMM13. The TIM22 complex also contains AGK and TIMM29. Interacts directly with TIMM9, TIMM10A and FXC1/TIMM10B. Interacts (when oxidized) with TIMM29; interaction is direct. Disulfide bonds promote efficient assembly of the TIM22 complex.

It localises to the mitochondrion inner membrane. Essential core component of the TIM22 complex, a complex that mediates the import and insertion of multi-pass transmembrane proteins into the mitochondrial inner membrane. In the TIM22 complex, it constitutes the voltage-activated and signal-gated channel. Forms a twin-pore translocase that uses the membrane potential as external driving force in 2 voltage-dependent steps. The chain is Mitochondrial import inner membrane translocase subunit Tim22 (TIMM22) from Bos taurus (Bovine).